The sequence spans 128 residues: Large ribosomal subunit protein bL19 (128 aa).

It belongs to the bacterial ribosomal protein bL19 family.

Its function is as follows. This protein is located at the 30S-50S ribosomal subunit interface and may play a role in the structure and function of the aminoacyl-tRNA binding site. This is Large ribosomal subunit protein bL19 from Caldicellulosiruptor bescii (strain ATCC BAA-1888 / DSM 6725 / KCTC 15123 / Z-1320) (Anaerocellum thermophilum).